Consider the following 129-residue polypeptide: MARVTVEDCVDKVENRFELVLLASHRARMIAAGAPITIDRDNDKNPVVSLREIADSTLTPDDLKEDLIQSLQKHVEVDEPESEVVPALSSAPQNPEAIGDIQFDRMTEEDLLRGLEGLVPPAETEDDSE.

Residues 77–98 (VDEPESEVVPALSSAPQNPEAI) form a disordered region.

This sequence belongs to the RNA polymerase subunit omega family. In terms of assembly, the RNAP catalytic core consists of 2 alpha, 1 beta, 1 beta' and 1 omega subunit. When a sigma factor is associated with the core the holoenzyme is formed, which can initiate transcription.

The catalysed reaction is RNA(n) + a ribonucleoside 5'-triphosphate = RNA(n+1) + diphosphate. Its function is as follows. Promotes RNA polymerase assembly. Latches the N- and C-terminal regions of the beta' subunit thereby facilitating its interaction with the beta and alpha subunits. The polypeptide is DNA-directed RNA polymerase subunit omega (Methylocella silvestris (strain DSM 15510 / CIP 108128 / LMG 27833 / NCIMB 13906 / BL2)).